The sequence spans 600 residues: Prostaglandin G/H synthase 1 (600 aa).

The first 24 residues, 1–24 (MSRQSISLRFPLLLLLLSPSPVFS), serve as a signal peptide directing secretion. The EGF-like domain maps to 32-70 (PVNPCCYYPCQHQGICVRFGLDRYQCDCTRTGYSGPNCT). Disulfide bonds link Cys36–Cys47, Cys37–Cys159, Cys41–Cys57, and Cys59–Cys69. A glycan (N-linked (GlcNAc...) asparagine) is linked at Asn68. 4 consecutive transmembrane segments (helical) span residues 74–82 (IWTWLRTTL), 86–92 (PSFIHFL), 97–105 (RWLWDFVNA), and 108–122 (IRDT…VRSN). Asn144 carries an N-linked (GlcNAc...) asparagine glycan. The Proton acceptor role is filled by His207. The active-site For cyclooxygenase activity is the Tyr385. His388 lines the heme b pocket. N-linked (GlcNAc...) asparagine glycosylation occurs at Asn410. Residues Cys569 and Cys575 are joined by a disulfide bond.

Belongs to the prostaglandin G/H synthase family. In terms of assembly, homodimer. It depends on heme b as a cofactor.

It localises to the endoplasmic reticulum membrane. It is found in the microsome membrane. It catalyses the reaction (5Z,8Z,11Z,14Z)-eicosatetraenoate + AH2 + 2 O2 = prostaglandin H2 + A + H2O. The catalysed reaction is (5Z,8Z,11Z,14Z)-eicosatetraenoate + 2 O2 = prostaglandin G2. It carries out the reaction prostaglandin G2 + AH2 = prostaglandin H2 + A + H2O. The enzyme catalyses (9Z,12Z)-octadecadienoate + AH2 + O2 = (9R)-hydroxy-(10E,12Z)-octadecadienoate + A + H2O. It catalyses the reaction (9Z,12Z)-octadecadienoate + AH2 + O2 = (9S)-hydroxy-(10E,12Z)-octadecadienoate + A + H2O. The catalysed reaction is (9Z,12Z)-octadecadienoate + AH2 + O2 = (13S)-hydroxy-(9Z,11E)-octadecadienoate + A + H2O. It carries out the reaction (9Z,12Z)-octadecadienoate + AH2 + O2 = (13R)-hydroxy-(9Z,11E)-octadecadienoate + A + H2O. Its pathway is lipid metabolism; prostaglandin biosynthesis. With respect to regulation, the cyclooxygenase activity is inhibited by nonsteroidal anti-inflammatory drugs (NSAIDs) including ibuprofen, flurbiprofen, ketoprofen, naproxen, flurbiprofen, anirolac, fenclofenac and diclofenac. Its function is as follows. Dual cyclooxygenase and peroxidase that plays an important role in the biosynthesis pathway of prostanoids, a class of C20 oxylipins mainly derived from arachidonate ((5Z,8Z,11Z,14Z)-eicosatetraenoate, AA, C20:4(n-6)), with a particular role in the inflammatory response. The cyclooxygenase activity oxygenates AA to the hydroperoxy endoperoxide prostaglandin G2 (PGG2), and the peroxidase activity reduces PGG2 to the hydroxy endoperoxide prostaglandin H2 (PGH2), the precursor of all 2-series prostaglandins and thromboxanes. This complex transformation is initiated by abstraction of hydrogen at carbon 13 (with S-stereochemistry), followed by insertion of molecular O2 to form the endoperoxide bridge between carbon 9 and 11 that defines prostaglandins. The insertion of a second molecule of O2 (bis-oxygenase activity) yields a hydroperoxy group in PGG2 that is then reduced to PGH2 by two electrons. Involved in the constitutive production of prostanoids in particular in the stomach and platelets. In gastric epithelial cells, it is a key step in the generation of prostaglandins, such as prostaglandin E2 (PGE2), which plays an important role in cytoprotection. In platelets, it is involved in the generation of thromboxane A2 (TXA2), which promotes platelet activation and aggregation, vasoconstriction and proliferation of vascular smooth muscle cells. Can also use linoleate (LA, (9Z,12Z)-octadecadienoate, C18:2(n-6)) as substrate and produce hydroxyoctadecadienoates (HODEs) in a regio- and stereospecific manner, being (9R)-HODE ((9R)-hydroxy-(10E,12Z)-octadecadienoate) and (13S)-HODE ((13S)-hydroxy-(9Z,11E)-octadecadienoate) its major products. The protein is Prostaglandin G/H synthase 1 (PTGS1) of Ovis aries (Sheep).